A 118-amino-acid polypeptide reads, in one-letter code: MSLLNKPKSEMTPEELQKREEEEFNTGPLSVLTQSVKNNTQVLINCRNNKKLLGRVKAFDRHCNMVLENVKEMWTEVPKSGKGKKKSKPVNKDRYISKMFLRGDSVIVVLRNPLIAGK.

The interval 1-31 is disordered; that stretch reads MSLLNKPKSEMTPEELQKREEEEFNTGPLSV. N-acetylserine is present on Ser-2. Glycyl lysine isopeptide (Lys-Gly) (interchain with G-Cter in SUMO2) cross-links involve residues Lys-6 and Lys-8. Basic and acidic residues predominate over residues 7–21; the sequence is PKSEMTPEELQKREE. Ser-9 is modified (phosphoserine). At Thr-12 the chain carries Phosphothreonine. The Sm domain occupies 29–115; that stretch reads LSVLTQSVKN…VIVVLRNPLI (87 aa).

The protein belongs to the snRNP core protein family. In terms of assembly, core component of the spliceosomal U1, U2, U4 and U5 small nuclear ribonucleoproteins (snRNPs), the building blocks of the spliceosome. Most spliceosomal snRNPs contain a common set of Sm proteins, SNRPB, SNRPD1, SNRPD2, SNRPD3, SNRPE, SNRPF and SNRPG that assemble in a heptameric protein ring on the Sm site of the small nuclear RNA to form the core snRNP. Component of the U1 snRNP. The U1 snRNP is composed of the U1 snRNA and the 7 core Sm proteins SNRPB, SNRPD1, SNRPD2, SNRPD3, SNRPE, SNRPF and SNRPG, and at least three U1 snRNP-specific proteins SNRNP70/U1-70K, SNRPA/U1-A and SNRPC/U1-C. Component of the U4/U6-U5 tri-snRNP complex composed of the U4, U6 and U5 snRNAs and at least PRPF3, PRPF4, PRPF6, PRPF8, PRPF31, SNRNP200, TXNL4A, SNRNP40, SNRPB, SNRPD1, SNRPD2, SNRPD3, SNRPE, SNRPF, SNRPG, DDX23, CD2BP2, PPIH, SNU13, EFTUD2, SART1 and USP39, plus LSM2, LSM3, LSM4, LSM5, LSM6, LSM7 and LSM8. Component of the minor spliceosome, which splices U12-type introns. Part of the SMN-Sm complex that contains SMN1, GEMIN2/SIP1, DDX20/GEMIN3, GEMIN4, GEMIN5, GEMIN6, GEMIN7, GEMIN8, STRAP/UNRIP and the Sm proteins SNRPB, SNRPD1, SNRPD2, SNRPD3, SNRPE, SNRPF and SNRPG; catalyzes core snRNPs assembly. Forms a 6S pICln-Sm complex composed of CLNS1A/pICln, SNRPD1, SNRPD2, SNRPE, SNRPF and SNRPG; ring-like structure where CLNS1A/pICln mimics additional Sm proteins and which is unable to assemble into the core snRNP. Interacts with SMN1; the interaction is direct. Interacts with GEMIN2; the interaction is direct. Interacts with SNRPD1; the interaction is direct. Interacts with SNRPF; the interaction is direct.

The protein resides in the cytoplasm. It is found in the cytosol. It localises to the nucleus. Its function is as follows. Plays a role in pre-mRNA splicing as a core component of the spliceosomal U1, U2, U4 and U5 small nuclear ribonucleoproteins (snRNPs), the building blocks of the spliceosome. Component of both the pre-catalytic spliceosome B complex and activated spliceosome C complexes. As a component of the minor spliceosome, involved in the splicing of U12-type introns in pre-mRNAs. The protein is Small nuclear ribonucleoprotein Sm D2 (SNRPD2) of Homo sapiens (Human).